Reading from the N-terminus, the 360-residue chain is Phospho-N-acetylmuramoyl-pentapeptide-transferase (360 aa).

The next 10 membrane-spanning stretches (helical) occupy residues 21 to 41 (YVTFRAILGLLTAMVFSLWWG), 74 to 94 (MGGLLILAGVFISVLLWGDLG), 97 to 117 (YVWVMLFVLGAFGLIGFIDDY), 134 to 154 (YILQSLAALAIAFYLYASAGS), 168 to 188 (VMPQLGAFFILLAYFTIVGSS), 199 to 219 (GLAIMPTVMVAAAFALIAYLS), 236 to 256 (SGELVIVCTAIVGAGLGFLWF), 263 to 283 (VFMGDVGSLSLGAALGTIAVL), 288 to 308 (ILLVIMGGVFVMETVSVILQV), and 338 to 358 (VIVRFWIISLFLVLLGLATLK).

It belongs to the glycosyltransferase 4 family. MraY subfamily. It depends on Mg(2+) as a cofactor.

It is found in the cell inner membrane. It carries out the reaction UDP-N-acetyl-alpha-D-muramoyl-L-alanyl-gamma-D-glutamyl-meso-2,6-diaminopimeloyl-D-alanyl-D-alanine + di-trans,octa-cis-undecaprenyl phosphate = di-trans,octa-cis-undecaprenyl diphospho-N-acetyl-alpha-D-muramoyl-L-alanyl-D-glutamyl-meso-2,6-diaminopimeloyl-D-alanyl-D-alanine + UMP. It participates in cell wall biogenesis; peptidoglycan biosynthesis. In terms of biological role, catalyzes the initial step of the lipid cycle reactions in the biosynthesis of the cell wall peptidoglycan: transfers peptidoglycan precursor phospho-MurNAc-pentapeptide from UDP-MurNAc-pentapeptide onto the lipid carrier undecaprenyl phosphate, yielding undecaprenyl-pyrophosphoryl-MurNAc-pentapeptide, known as lipid I. The polypeptide is Phospho-N-acetylmuramoyl-pentapeptide-transferase (Shewanella loihica (strain ATCC BAA-1088 / PV-4)).